Here is a 334-residue protein sequence, read N- to C-terminus: D-alanine--D-alanine ligase (334 aa).

Positions lysine 124–leucine 329 constitute an ATP-grasp domain. An ATP-binding site is contributed by alanine 154 to glutamate 209. 3 residues coordinate Mg(2+): aspartate 283, glutamate 296, and asparagine 298.

It belongs to the D-alanine--D-alanine ligase family. Mg(2+) is required as a cofactor. Requires Mn(2+) as cofactor.

The protein localises to the cytoplasm. The enzyme catalyses 2 D-alanine + ATP = D-alanyl-D-alanine + ADP + phosphate + H(+). The protein operates within cell wall biogenesis; peptidoglycan biosynthesis. Functionally, cell wall formation. The polypeptide is D-alanine--D-alanine ligase (Shewanella pealeana (strain ATCC 700345 / ANG-SQ1)).